The sequence spans 467 residues: MPATKFSRRTLLTAGSALAVLPFLRALPVQAREPRETVDIKDYPADDGIASFKQAFADGQTVVVPPGWVCENINAAITIPAGKTLRVQGAVRGNGRGRFILQDGCQVVGEQGGSLHNVTLDVRGSDCVIKGVAMSGFGPVAQIFIGGKEPQVMRNLIIDDITVTHANYAILRQGFHNQMDGARITHSRFSDLQGDAIEWNVAIHDRDILISDHVIERINCTNGKINWGIGIGLAGSTYDNSYPEDQAVKNFVVANITGSDCRQLVHVENGKHFVIRNVKAKNITPGFSKNAGIDNATIAIYGCDNFVIDNIDMTNSAGMLIGYGVVKGKYLSIPQNFKLNAIRLDNRQVAYKLRGIQISSGNTPSFVAITNVRMTRATLELHNQPQHLFLRNINVMQTSAIGPALKMHFDLRKDVRGQFMARQDTLLSLANVHAINENGQSSVDIDRINHQTVNVEAVNFSLPKRGG.

The protein operates within slime biogenesis; slime polysaccharide biosynthesis. The chain is Colanic acid biosynthesis protein WcaM (wcaM) from Salmonella typhimurium (strain LT2 / SGSC1412 / ATCC 700720).